A 419-amino-acid polypeptide reads, in one-letter code: Homeobox-containing protein 1 (419 aa).

An HNF-p1 domain is found at 18–49 (DEPRFTIEQIDLLQRLRRTGMTKHEILHALET). The disordered stretch occupies residues 56 to 152 (EHSDKFGRRS…GQRSYSFEAS (97 aa)). Lys60 participates in a covalent cross-link: Glycyl lysine isopeptide (Lys-Gly) (interchain with G-Cter in SUMO2). Composition is skewed to low complexity over residues 64–73 (RSSYGGSSYG) and 81–93 (ASSS…TQTQ). A compositionally biased stretch (polar residues) spans 94 to 132 (HSGMSPSPSNSYDTSPLPCTTNQNGRENNDRLSTSNGKM). A Glycyl lysine isopeptide (Lys-Gly) (interchain with G-Cter in SUMO2) cross-link involves residue Lys131. The region spanning 145–241 (RSYSFEASEE…PGATLSMRPA (97 aa)) is the POU-specific atypical domain. Position 148 is a phosphoserine (Ser148). Lys161 participates in a covalent cross-link: Glycyl lysine isopeptide (Lys-Gly) (interchain with G-Cter in SUMO2). Ser170 carries the phosphoserine modification. Glycyl lysine isopeptide (Lys-Gly) (interchain with G-Cter in SUMO2) cross-links involve residues Lys174, Lys217, and Lys310. The homeobox DNA-binding region spans 267–341 (RRGSRFTWRK…NRRKEIKRRA (75 aa)). A disordered region spans residues 352-384 (IDVQSPGGHSNSDDVDGNDYSEQDDSTSHSDHQ). Over residues 364–376 (DDVDGNDYSEQDD) the composition is skewed to acidic residues. Lys412 is covalently cross-linked (Glycyl lysine isopeptide (Lys-Gly) (interchain with G-Cter in SUMO1); alternate). Lys412 participates in a covalent cross-link: Glycyl lysine isopeptide (Lys-Gly) (interchain with G-Cter in SUMO2); alternate.

As to quaternary structure, associates with the telomerase holoenzyme complex. Interacts with DKC1, XRCC6 and COIL.

Its subcellular location is the nucleus. It localises to the cytoplasm. The protein resides in the chromosome. It is found in the telomere. The protein localises to the cajal body. Its subcellular location is the PML body. Functionally, binds directly to 5'-TTAGGG-3' repeats in telomeric DNA. Associates with the telomerase complex at sites of active telomere processing and positively regulates telomere elongation. Important for TERT binding to chromatin, indicating a role in recruitment of the telomerase complex to telomeres. Also plays a role in the alternative lengthening of telomeres (ALT) pathway in telomerase-negative cells where it promotes formation and/or maintenance of ALT-associated promyelocytic leukemia bodies (APBs). Enhances formation of telomere C-circles in ALT cells, suggesting a possible role in telomere recombination. Might also be involved in the DNA damage response at telomeres. The polypeptide is Homeobox-containing protein 1 (Hmbox1) (Mus musculus (Mouse)).